The sequence spans 187 residues: Ribosome-recycling factor (187 aa).

The protein belongs to the RRF family.

It localises to the cytoplasm. Responsible for the release of ribosomes from messenger RNA at the termination of protein biosynthesis. May increase the efficiency of translation by recycling ribosomes from one round of translation to another. In Parabacteroides distasonis (strain ATCC 8503 / DSM 20701 / CIP 104284 / JCM 5825 / NCTC 11152), this protein is Ribosome-recycling factor.